Reading from the N-terminus, the 201-residue chain is Urease accessory protein UreG (201 aa).

Residue 11-18 (GPVGSGKT) coordinates GTP.

It belongs to the SIMIBI class G3E GTPase family. UreG subfamily. As to quaternary structure, homodimer. UreD, UreF and UreG form a complex that acts as a GTP-hydrolysis-dependent molecular chaperone, activating the urease apoprotein by helping to assemble the nickel containing metallocenter of UreC. The UreE protein probably delivers the nickel.

Its subcellular location is the cytoplasm. Functionally, facilitates the functional incorporation of the urease nickel metallocenter. This process requires GTP hydrolysis, probably effectuated by UreG. The chain is Urease accessory protein UreG from Prochlorococcus marinus subsp. pastoris (strain CCMP1986 / NIES-2087 / MED4).